The primary structure comprises 1058 residues: Carbamoyl phosphate synthase large chain (1058 aa).

The carboxyphosphate synthetic domain stretch occupies residues 1–401 (MPKRKDIQKI…SLLKACRSLE (401 aa)). 12 residues coordinate ATP: Arg129, Arg169, Gly175, Gly176, Arg208, Ile210, Glu215, Gly241, Ile242, His243, Gln284, and Glu298. Positions 133–327 (KQLMQELDQP…IAKLAAKIAV (195 aa)) constitute an ATP-grasp 1 domain. Positions 284, 298, and 300 each coordinate Mg(2+). Mn(2+) is bound by residues Gln284, Glu298, and Asn300. The oligomerization domain stretch occupies residues 402 to 546 (IGVCHNEMTS…YSTYELENES (145 aa)). Positions 547–929 (VQSNKESILV…ALYKAFEANN (383 aa)) are carbamoyl phosphate synthetic domain. The ATP-grasp 2 domain occupies 671–861 (EKALKELGIP…MAQIATKLIL (191 aa)). Residues Arg707, Ser746, Ile748, Glu752, Gly777, Val778, His779, Ser780, Gln820, and Glu832 each coordinate ATP. 3 residues coordinate Mg(2+): Gln820, Glu832, and Asn834. Gln820, Glu832, and Asn834 together coordinate Mn(2+). Positions 930–1058 (SHLSEFGQIV…ESRCFNIEAI (129 aa)) constitute an MGS-like domain. Residues 930 to 1058 (SHLSEFGQIV…ESRCFNIEAI (129 aa)) form an allosteric domain region.

This sequence belongs to the CarB family. As to quaternary structure, composed of two chains; the small (or glutamine) chain promotes the hydrolysis of glutamine to ammonia, which is used by the large (or ammonia) chain to synthesize carbamoyl phosphate. Tetramer of heterodimers (alpha,beta)4. Requires Mg(2+) as cofactor. Mn(2+) serves as cofactor.

The enzyme catalyses hydrogencarbonate + L-glutamine + 2 ATP + H2O = carbamoyl phosphate + L-glutamate + 2 ADP + phosphate + 2 H(+). It catalyses the reaction hydrogencarbonate + NH4(+) + 2 ATP = carbamoyl phosphate + 2 ADP + phosphate + 2 H(+). The protein operates within amino-acid biosynthesis; L-arginine biosynthesis; carbamoyl phosphate from bicarbonate: step 1/1. It participates in pyrimidine metabolism; UMP biosynthesis via de novo pathway; (S)-dihydroorotate from bicarbonate: step 1/3. Its function is as follows. Large subunit of the glutamine-dependent carbamoyl phosphate synthetase (CPSase). CPSase catalyzes the formation of carbamoyl phosphate from the ammonia moiety of glutamine, carbonate, and phosphate donated by ATP, constituting the first step of 2 biosynthetic pathways, one leading to arginine and/or urea and the other to pyrimidine nucleotides. The large subunit (synthetase) binds the substrates ammonia (free or transferred from glutamine from the small subunit), hydrogencarbonate and ATP and carries out an ATP-coupled ligase reaction, activating hydrogencarbonate by forming carboxy phosphate which reacts with ammonia to form carbamoyl phosphate. This chain is Carbamoyl phosphate synthase large chain, found in Streptococcus pyogenes serotype M3 (strain ATCC BAA-595 / MGAS315).